The following is a 345-amino-acid chain: Delta(1)-pyrroline-2-carboxylate reductase (345 aa).

The Charge relay system role is filled by Ser-47. Catalysis depends on His-48, which acts as the Proton donor. Substrate is bound at residue Arg-52. His-121–Leu-125 contacts NADP(+). Thr-161 contacts substrate. An NADP(+)-binding site is contributed by Asp-179–Ala-181. Position 187 to 188 (Arg-187 to Gly-188) interacts with substrate. The Charge relay system role is filled by Glu-189. NADP(+)-binding positions include His-230–Lys-231 and Arg-305–Arg-311.

This sequence belongs to the LDH2/MDH2 oxidoreductase family. As to quaternary structure, homodimer.

It carries out the reaction L-proline + NAD(+) = 1-pyrroline-2-carboxylate + NADH + H(+). The enzyme catalyses L-proline + NADP(+) = 1-pyrroline-2-carboxylate + NADPH + H(+). In terms of biological role, catalyzes the reduction of Delta(1)-pyrroline-2-carboxylate (Pyr2C) to L-proline, using NADPH as the electron donor. Is likely involved in a degradation pathway that converts trans-3-hydroxy-L-proline (t3LHyp) to L-proline, which would allow A.tumefaciens to grow on t3LHyp as a sole carbon source. In Agrobacterium fabrum (strain C58 / ATCC 33970) (Agrobacterium tumefaciens (strain C58)), this protein is Delta(1)-pyrroline-2-carboxylate reductase.